Here is a 307-residue protein sequence, read N- to C-terminus: Ornithine carbamoyltransferase (307 aa).

Carbamoyl phosphate-binding positions include 53–56 (STRT), glutamine 80, arginine 104, and 131–134 (HPCQ). Residues asparagine 162, aspartate 219, and 223–224 (SM) each bind L-ornithine. Residues 259 to 260 (CL) and arginine 287 each bind carbamoyl phosphate.

It belongs to the aspartate/ornithine carbamoyltransferase superfamily. OTCase family.

It is found in the cytoplasm. The catalysed reaction is carbamoyl phosphate + L-ornithine = L-citrulline + phosphate + H(+). The protein operates within amino-acid biosynthesis; L-arginine biosynthesis; L-arginine from L-ornithine and carbamoyl phosphate: step 1/3. Its function is as follows. Reversibly catalyzes the transfer of the carbamoyl group from carbamoyl phosphate (CP) to the N(epsilon) atom of ornithine (ORN) to produce L-citrulline. The protein is Ornithine carbamoyltransferase of Psychrobacter arcticus (strain DSM 17307 / VKM B-2377 / 273-4).